A 155-amino-acid chain; its full sequence is Ribosomal RNA large subunit methyltransferase H (155 aa).

Residues L72, G103, and L122–L127 contribute to the S-adenosyl-L-methionine site.

It belongs to the RNA methyltransferase RlmH family. As to quaternary structure, homodimer.

It is found in the cytoplasm. The catalysed reaction is pseudouridine(1915) in 23S rRNA + S-adenosyl-L-methionine = N(3)-methylpseudouridine(1915) in 23S rRNA + S-adenosyl-L-homocysteine + H(+). In terms of biological role, specifically methylates the pseudouridine at position 1915 (m3Psi1915) in 23S rRNA. This is Ribosomal RNA large subunit methyltransferase H from Variovorax paradoxus (strain S110).